Consider the following 99-residue polypeptide: uncharacterized protein (99 aa).

This is an uncharacterized protein from Saccharolobus islandicus (Sulfolobus islandicus).